The primary structure comprises 494 residues: 4-trimethylaminobutyraldehyde dehydrogenase (494 aa).

Position 2 is an N-acetylserine (Ser-2). At Lys-30 the chain carries N6-acetyllysine; alternate. Lys-30 is subject to N6-succinyllysine; alternate. Lys-59 is modified (N6-succinyllysine). Residues Lys-180 and 232–236 each bind NAD(+); that span reads GSVPT. The active-site Proton acceptor is the Glu-254. Cys-288 serves as the catalytic Nucleophile. The residue at position 298 (Lys-298) is an N6-acetyllysine. The residue at position 303 (Lys-303) is an N6-acetyllysine; alternate. At Lys-303 the chain carries N6-succinyllysine; alternate. Lys-344 carries the post-translational modification N6-acetyllysine. Glu-391 contributes to the NAD(+) binding site.

This sequence belongs to the aldehyde dehydrogenase family. In terms of assembly, homotetramer.

Its subcellular location is the cytoplasm. It localises to the cytosol. It carries out the reaction 4-(trimethylamino)butanal + NAD(+) + H2O = 4-(trimethylamino)butanoate + NADH + 2 H(+). It catalyses the reaction an aldehyde + NAD(+) + H2O = a carboxylate + NADH + 2 H(+). The enzyme catalyses 4-aminobutanal + NAD(+) + H2O = 4-aminobutanoate + NADH + 2 H(+). The catalysed reaction is formaldehyde + NAD(+) + H2O = formate + NADH + 2 H(+). It carries out the reaction acetaldehyde + NAD(+) + H2O = acetate + NADH + 2 H(+). It catalyses the reaction imidazole-4-acetaldehyde + NAD(+) + H2O = imidazole-4-acetate + NADH + 2 H(+). The enzyme catalyses acrolein + NAD(+) + H2O = acrylate + NADH + 2 H(+). The catalysed reaction is (5-hydroxyindol-3-yl)acetaldehyde + NAD(+) + H2O = (5-hydroxyindol-3-yl)acetate + NADH + 2 H(+). It carries out the reaction 3,4-dihydroxyphenylacetaldehyde + NAD(+) + H2O = 3,4-dihydroxyphenylacetate + NADH + 2 H(+). It catalyses the reaction spermine monoaldehyde + NAD(+) + H2O = N-(2-carboxyethyl)spermidine + NADH + 2 H(+). The enzyme catalyses propanal + NAD(+) + H2O = propanoate + NADH + 2 H(+). The catalysed reaction is butanal + NAD(+) + H2O = butanoate + NADH + 2 H(+). It carries out the reaction pentanal + NAD(+) + H2O = pentanoate + NADH + 2 H(+). It catalyses the reaction hexanal + NAD(+) + H2O = hexanoate + NADH + 2 H(+). It participates in amine and polyamine biosynthesis; carnitine biosynthesis. Functionally, converts gamma-trimethylaminobutyraldehyde into gamma-butyrobetaine with high efficiency (in vitro). Can catalyze the irreversible oxidation of a broad range of aldehydes to the corresponding acids in an NAD-dependent reaction, but with low efficiency. Catalyzes the oxidation of aldehydes arising from biogenic amines and polyamines. The chain is 4-trimethylaminobutyraldehyde dehydrogenase (ALDH9A1) from Pongo abelii (Sumatran orangutan).